A 1744-amino-acid polypeptide reads, in one-letter code: Transcription initiation factor TFIID subunit 1 (1744 aa).

Disordered stretches follow at residues 1-65, 248-275, 429-488, 1001-1024, 1071-1098, and 1186-1213; these read MNNT…EKNE, VSIRSGKPLNYRTPDDLPSTSSGPAPNS, PEDR…DNDP, QNQTLANTDPISTDDDSTDADSDN, TTNQVEKGEKKEEGEVTAEEKKSASQFG, and MKKNEEKAAHKVQKMTEKKVKPIKPPNP. Residues 43–52 show a composition bias toward polar residues; sequence ACSSASNGGS. Residues 55-64 show a composition bias toward basic and acidic residues; that stretch reads VKMEPKVEKN. Residues 429 to 439 are compositionally biased toward basic and acidic residues; that stretch reads PEDRRHDEGPD. Positions 440-449 are enriched in basic residues; it reads HHHHHHHHRK. Over residues 477–488 the composition is skewed to polar residues; sequence ESTMAQFTDNDP. A compositionally biased stretch (acidic residues) spans 1012-1024; it reads STDDDSTDADSDN. Coiled coils occupy residues 1019–1080, 1161–1204, and 1282–1314; these read DADS…KGEK, YAQM…TEKK, and NFAEIRKEQNREEKLKRKLAKMAEAAVRERQMA. Basic and acidic residues-rich tracts occupy residues 1076–1093 and 1186–1205; these read EKGEKKEEGEVTAEEKKS and MKKNEEKAAHKVQKMTEKKV. The segment covering 1319-1344 has biased composition (gly residues); it reads YGGGASSSGGAGGGGSGIGGSTGGGI. A disordered region spans residues 1319–1391; that stretch reads YGGGASSSGG…SKRRSSMMPE (73 aa). Positions 1354 to 1363 are enriched in polar residues; that stretch reads SQISGTSSFL. The span at 1372-1381 shows a compositional bias: low complexity; sequence GGNRNSSVSG. A Nuclear localization signal motif is present at residues 1379–1386; the sequence is VSGSKRRS. Bromo domains are found at residues 1404–1512 and 1537–1634; these read RARA…MIER and YLLG…VKDQ. Residues 1666-1694 are compositionally biased toward acidic residues; the sequence is DHMDEMEDHPTEEEEEDDDDEIMDDDMDI. Disordered regions lie at residues 1666–1702 and 1714–1744; these read DHMDEMEDHPTEEEEEDDDDEIMDDDMDIDATGYSYD and NDLAMSDSDEDERAEDVKRPANGDDNLLDSF.

This sequence belongs to the TAF1 family. As to quaternary structure, component of the TFIID basal transcription factor complex, composed of TATA-box-binding protein tbp-1, and a number of TBP-associated factors (TAFs).

It is found in the nucleus. Its function is as follows. The TFIID basal transcription factor complex plays a major role in the initiation of RNA polymerase II (Pol II)-dependent transcription. TFIID recognizes and binds promoters via its subunit tbp-1, a TATA-box-binding protein, and promotes assembly of the pre-initiation complex (PIC). The TFIID complex consists of tbp-1 and TBP-associated factors (TAFs), including taf-1. May regulate RNA polymerase II activity and thereby may control transcription initiation by RNA polymerase II. Required for early embryonic development. Essential for embryonic transcription of several genes. This Caenorhabditis elegans protein is Transcription initiation factor TFIID subunit 1.